Here is a 380-residue protein sequence, read N- to C-terminus: MLPESDDFTNTAWHPQSWMHDLRSFIGEMAITQVCFVGSHDAASYGVSKDSPFGADAPGFLLGDSVFASLLRFLFRGICASWSRCQWMSVRAQLNHGVRYLDMRVATNPEDASRLYTLHHQISVPLADVLEDVKAFLNDPLSADEFIVLDFQHLYLTDDSDGKGKFFRELDRLSDRFIPVDVPLTTPLEFLWRASSRRRIFLVVGSGEDESPYPAARIRSKCMVSRWVNENSLRKLLEALDNLLLDDLKYPQTGVPSKLYVTQAVFTPRYSDIFLGIFPKISRRVVSSIYDVATRVNPSLLEWFYSLNARGLLDGMKVMIPSGINTHGNIFMLDCVELGSCQIMDGTTETNAVGMCVYLNILRASRLFEDSSAAPSLNEG.

Residues 31 to 205 (ITQVCFVGSH…SRRRIFLVVG (175 aa)) form the PI-PLC X-box domain.

Monomer.

The protein resides in the membrane. It catalyses the reaction a 6-(alpha-D-glucosaminyl)-1-(1,2-diacyl-sn-glycero-3-phospho)-1D-myo-inositol = 6-(alpha-D-glucosaminyl)-1D-myo-inositol 1,2-cyclic phosphate + a 1,2-diacyl-sn-glycerol. Its function is as follows. By hydrolysis of the attached glycolipid, releases soluble variant surface glycoprotein containing phosphoinositol from the cell wall of T.brucei after cell lysis. It also cleaves similar membrane anchors on some mammalian proteins. VSG lipase may play a role in processes such as parasite differentiation or antigenic variation. The protein is Variant-surface-glycoprotein phospholipase C of Trypanosoma cruzi.